A 644-amino-acid polypeptide reads, in one-letter code: 3D-(3,5/4)-trihydroxycyclohexane-1,2-dione hydrolase 1 (644 aa).

A thiamine diphosphate-binding site is contributed by Glu-65. The segment at 442–522 (SLPGDLQRMW…INVLLFDNSG (81 aa)) is thiamine pyrophosphate binding. 2 residues coordinate Mg(2+): Asp-493 and Asn-520.

It belongs to the TPP enzyme family. Mg(2+) is required as a cofactor. It depends on thiamine diphosphate as a cofactor.

The catalysed reaction is 3D-3,5/4-trihydroxycyclohexane-1,2-dione + H2O = 5-deoxy-D-glucuronate + H(+). It participates in polyol metabolism; myo-inositol degradation into acetyl-CoA; acetyl-CoA from myo-inositol: step 3/7. Functionally, involved in the cleavage of the C1-C2 bond of 3D-(3,5/4)-trihydroxycyclohexane-1,2-dione (THcHDO) to yield 5-deoxy-glucuronate (5DG). The sequence is that of 3D-(3,5/4)-trihydroxycyclohexane-1,2-dione hydrolase 1 from Bacillus cereus (strain ZK / E33L).